A 466-amino-acid polypeptide reads, in one-letter code: Putative ABC transporter ATP-binding protein MG065 (466 aa).

One can recognise an ABC transporter domain in the interval 233–463 (IELKNVYKYI…NLNPKQVEEI (231 aa)). 269-276 (GPSGSGKT) is a binding site for ATP.

The protein belongs to the ABC transporter superfamily.

This Mycoplasma genitalium (strain ATCC 33530 / DSM 19775 / NCTC 10195 / G37) (Mycoplasmoides genitalium) protein is Putative ABC transporter ATP-binding protein MG065.